The primary structure comprises 152 residues: Phosphopantetheine adenylyltransferase (152 aa).

Ser9 lines the substrate pocket. ATP contacts are provided by residues 9-10 (SF) and His17. Residues Lys41, Thr73, and Arg87 each coordinate substrate. ATP is bound by residues 88 to 90 (GLR), Glu98, and 122 to 128 (TSFISSS).

This sequence belongs to the bacterial CoaD family. As to quaternary structure, homohexamer. The cofactor is Mg(2+).

Its subcellular location is the cytoplasm. It carries out the reaction (R)-4'-phosphopantetheine + ATP + H(+) = 3'-dephospho-CoA + diphosphate. The protein operates within cofactor biosynthesis; coenzyme A biosynthesis; CoA from (R)-pantothenate: step 4/5. Functionally, reversibly transfers an adenylyl group from ATP to 4'-phosphopantetheine, yielding dephospho-CoA (dPCoA) and pyrophosphate. The polypeptide is Phosphopantetheine adenylyltransferase (Flavobacterium johnsoniae (strain ATCC 17061 / DSM 2064 / JCM 8514 / BCRC 14874 / CCUG 350202 / NBRC 14942 / NCIMB 11054 / UW101) (Cytophaga johnsonae)).